The sequence spans 444 residues: Putative permease IIC component YwbA (444 aa).

Positions 8–421 constitute a PTS EIIC type-3 domain; that stretch reads MEEKIMPVAG…LITCAIYYPF (414 aa). The next 10 membrane-spanning stretches (helical) occupy residues 31–51, 72–92, 104–124, 138–158, 187–207, 223–243, 246–266, 291–311, 349–371, and 402–422; these read GIILTMPLIIIGSVFLILTSL, LGYPVNASFDIMAMIAAFGIA, LSAGAISIAAFLLATPFEVPF, GIPITLLGSKGLFVAMLIALF, FVALIPGFIIVLLVWLARLLI, LGTPLSILGGSLGGSLIAEFV, LLWSCGIHGASIIGGIMAPIW, FFQIWINVGGSGATLALVLTM, PLLIVPFIIAPLLTITATYIGMS, and SGAVMQLVNLLITCAIYYPFF.

It localises to the cell membrane. In terms of biological role, the phosphoenolpyruvate-dependent sugar phosphotransferase system (PTS), a major carbohydrate active -transport system, catalyzes the phosphorylation of incoming sugar substrates concomitant with their translocation across the cell membrane. In Bacillus subtilis (strain 168), this protein is Putative permease IIC component YwbA (ywbA).